The sequence spans 121 residues: Ribosome-binding factor A (121 aa).

This sequence belongs to the RbfA family. Monomer. Binds 30S ribosomal subunits, but not 50S ribosomal subunits or 70S ribosomes.

It is found in the cytoplasm. In terms of biological role, one of several proteins that assist in the late maturation steps of the functional core of the 30S ribosomal subunit. Associates with free 30S ribosomal subunits (but not with 30S subunits that are part of 70S ribosomes or polysomes). Required for efficient processing of 16S rRNA. May interact with the 5'-terminal helix region of 16S rRNA. This chain is Ribosome-binding factor A, found in Oenococcus oeni (strain ATCC BAA-331 / PSU-1).